A 164-amino-acid chain; its full sequence is E3 ubiquitin ligase complex SCF subunit sconC (164 aa).

Positions 106–164 (ILAANYLDIKALLDVGCKTVANMIKGKSPEEIRKTFNIQNDFTPEEEDQIRRENEWAEE) are interaction with the F-box domain of F-box proteins.

This sequence belongs to the SKP1 family. As to quaternary structure, component of the SCF (SKP1-CUL1-F-box protein) E3 ubiquitin ligase complexes.

It participates in protein modification; protein ubiquitination. Its function is as follows. Essential component of the SCF (SKP1-CUL1-F-box protein) E3 ubiquitin ligase complexes, which mediate the ubiquitination and subsequent proteasomal degradation of target proteins. Controls sulfur metabolite repression, probably by mediating the inactivation or degradation of the metR transcription factor. This Arthroderma benhamiae (strain ATCC MYA-4681 / CBS 112371) (Trichophyton mentagrophytes) protein is E3 ubiquitin ligase complex SCF subunit sconC (sconC).